The chain runs to 215 residues: Ras-related protein Rab-5A (215 aa).

GTP contacts are provided by Ser-29, Ala-30, Gly-32, Lys-33, Ser-34, Ser-35, His-46, Glu-47, Thr-52, and Gly-78. Ser-34 is a Mg(2+) binding site. 2 short sequence motifs (switch) span residues 44–56 (QFHE…IGAA) and 77–93 (AGQE…YRGA). Thr-52 contacts Mg(2+). Position 84 is a phosphoserine; by LRRK2 (Ser-84). (Microbial infection) N-beta-linked (GlcNAc) arginine glycosylation is present at Arg-120. GTP is bound by residues Asn-133, Lys-134, Asp-136, Ala-164, and Lys-165. Residues 181–215 (LPKNEPQNPGANSARGRGVDLTEPTQPTRNQCCSN) are disordered. Residues 203 to 215 (EPTQPTRNQCCSN) are compositionally biased toward polar residues. S-geranylgeranyl cysteine attachment occurs at residues Cys-212 and Cys-213.

It belongs to the small GTPase superfamily. Rab family. Interacts with SGSM1 and SGSM3. Interacts with PIK3CB. Interacts with GDI1; this promotes dissociation from membranes; phosphorylation at Ser-84 disrupts this interaction. Interacts with GDI2; phosphorylation at Ser-84 disrupts the interaction. Interacts with EEA1. Interacts with RIN1 and GAPVD1, which regulate its pathway, probably by acting as a GEF. Interacts with RINL. Interacts with ALS2CL, SUN2, ZFYVE20 and RUFY1. Interacts with RABEP1; one RABEP1 homodimer binds two RAB5A chains, but at opposite sides of the dimer. Interacts with OCRL. Interacts with INPP5F. May be a component of a complex composed of RAB5A, DYN2 and PIK3C3. Does not interact with BLOC-3 complex (heterodimer of HPS1 and HPS4). Interacts with CLN5. Interacts with APPL2. Interacts with F8A1/F8A2/F8A3. Found in a complex with F8A1/F8A2/F8A3, HTT and RAB5A; mediates the recruitment of HTT by RAB5A onto early endosomes. Interacts with ATP9A. Interacts with PPP1R21; mediates the recruitment of FERRY complex by RAB5A onto early endosomes. Requires Mg(2+) as cofactor. In terms of processing, phosphorylation of Ser-84 in the switch II region by LRRK2 prevents the association of RAB regulatory proteins, including RAB GDP dissociation inhibitors GDI1 and GDI2. Post-translationally, (Microbial infection) Glycosylated on arginine residues by S.typhimurium protein Ssek3.

It localises to the cell membrane. Its subcellular location is the early endosome membrane. The protein resides in the melanosome. The protein localises to the cytoplasmic vesicle. It is found in the cell projection. It localises to the ruffle. Its subcellular location is the membrane. The protein resides in the cytoplasm. The protein localises to the cytosol. It is found in the phagosome membrane. It localises to the endosome membrane. It catalyses the reaction GTP + H2O = GDP + phosphate + H(+). Its activity is regulated as follows. Regulated by guanine nucleotide exchange factors (GEFs) including RINL, which promote the exchange of bound GDP for free GTP. Regulated by GTPase activating proteins (GAPs) which increase the GTP hydrolysis activity. Inhibited by GDP dissociation inhibitors (GDIs). Functionally, the small GTPases Rab are key regulators of intracellular membrane trafficking, from the formation of transport vesicles to their fusion with membranes. Rabs cycle between an inactive GDP-bound form and an active GTP-bound form that is able to recruit to membranes different sets of downstream effectors directly responsible for vesicle formation, movement, tethering and fusion. RAB5A is required for the fusion of plasma membranes and early endosomes. Contributes to the regulation of filopodia extension. Required for the exosomal release of SDCBP, CD63, PDCD6IP and syndecan. Regulates maturation of apoptotic cell-containing phagosomes, probably downstream of DYN2 and PIK3C3. This chain is Ras-related protein Rab-5A, found in Homo sapiens (Human).